A 336-amino-acid polypeptide reads, in one-letter code: MLGYILWTSLYVLLIVIPLILVVAYYTYAERKVIGYMQDRIGPNRVGSFGLLQPIFDALKLFLKEIIVPTNSNRYLFFIAPILAFAPAYAAWAVIPFSKGVVLSDMNLGLLYILAMTSFSIYGIVIAGWASNSKYSLFGALRAGAQVISYELAMGFAIVGVVIAAGSMGITGIIEAQSGGIWHWYFISLFPLFIVYFIAGIAETNRAPFDVVEGESEIVAGHHIEYTGSRFALFFLAEYANMILISILTSIMFLGGWNSPFQATALESIFGFVPGVVWLFAKTGIFMFMFLWVRATYPRYRYDQIMRLGWKIFIPLTFVWVVIVACMVRLGVGPWW.

The next 8 membrane-spanning stretches (helical) occupy residues 4-24 (YILW…LVVA), 75-95 (YLFF…WAVI), 108-128 (LGLL…VIAG), 154-174 (MGFA…TGII), 181-201 (IWHW…IAGI), 233-253 (LFFL…SIMF), 272-292 (FVPG…MFLW), and 308-328 (LGWK…ACMV).

It belongs to the complex I subunit 1 family. In terms of assembly, NDH-1 is composed of 14 different subunits. Subunits NuoA, H, J, K, L, M, N constitute the membrane sector of the complex.

It is found in the cell inner membrane. It carries out the reaction a quinone + NADH + 5 H(+)(in) = a quinol + NAD(+) + 4 H(+)(out). Functionally, NDH-1 shuttles electrons from NADH, via FMN and iron-sulfur (Fe-S) centers, to quinones in the respiratory chain. The immediate electron acceptor for the enzyme in this species is believed to be ubiquinone. Couples the redox reaction to proton translocation (for every two electrons transferred, four hydrogen ions are translocated across the cytoplasmic membrane), and thus conserves the redox energy in a proton gradient. This subunit may bind ubiquinone. The polypeptide is NADH-quinone oxidoreductase subunit H (Francisella tularensis subsp. mediasiatica (strain FSC147)).